Here is a 407-residue protein sequence, read N- to C-terminus: Carbamoyl phosphate synthase small chain (407 aa).

Residues 1–203 form a CPSase region; sequence MSQNESGTIA…EPCGEYEGKE (203 aa). 3 residues coordinate L-glutamine: S61, G255, and G257. In terms of domain architecture, Glutamine amidotransferase type-1 spans 207-405; that stretch reads TVAAVDLGIK…CELMKNNSKE (199 aa). Residue C283 is the Nucleophile of the active site. F284, Q287, N325, G327, and F328 together coordinate L-glutamine. Residues H378 and E380 contribute to the active site.

Belongs to the CarA family. In terms of assembly, composed of two chains; the small (or glutamine) chain promotes the hydrolysis of glutamine to ammonia, which is used by the large (or ammonia) chain to synthesize carbamoyl phosphate. Tetramer of heterodimers (alpha,beta)4.

The catalysed reaction is hydrogencarbonate + L-glutamine + 2 ATP + H2O = carbamoyl phosphate + L-glutamate + 2 ADP + phosphate + 2 H(+). It carries out the reaction L-glutamine + H2O = L-glutamate + NH4(+). The protein operates within amino-acid biosynthesis; L-arginine biosynthesis; carbamoyl phosphate from bicarbonate: step 1/1. It participates in pyrimidine metabolism; UMP biosynthesis via de novo pathway; (S)-dihydroorotate from bicarbonate: step 1/3. In terms of biological role, small subunit of the glutamine-dependent carbamoyl phosphate synthetase (CPSase). CPSase catalyzes the formation of carbamoyl phosphate from the ammonia moiety of glutamine, carbonate, and phosphate donated by ATP, constituting the first step of 2 biosynthetic pathways, one leading to arginine and/or urea and the other to pyrimidine nucleotides. The small subunit (glutamine amidotransferase) binds and cleaves glutamine to supply the large subunit with the substrate ammonia. In Bifidobacterium longum (strain NCC 2705), this protein is Carbamoyl phosphate synthase small chain.